Here is a 231-residue protein sequence, read N- to C-terminus: Insertion sequence IS1162 putative ATP-binding protein (231 aa).

Residue 107 to 114 (GPTGVGKT) participates in ATP binding.

This sequence belongs to the IS21/IS1162 putative ATP-binding protein family.

The polypeptide is Insertion sequence IS1162 putative ATP-binding protein (Pseudomonas fluorescens).